A 124-amino-acid polypeptide reads, in one-letter code: MRHYEIVFIVHPDQSEQVPAMIERYKTTITTHGGQIHRVEDWGRRQLAYMIEKLAKAHYVCMNIECDQTTLDELEHAFKFNDAVLRHLIVKMKKAETGPSPMMKEVQREEAKKAAAAQPTEAQA.

The segment at 96–124 (ETGPSPMMKEVQREEAKKAAAAQPTEAQA) is disordered. The segment covering 114-124 (AAAAQPTEAQA) has biased composition (low complexity).

Belongs to the bacterial ribosomal protein bS6 family.

Its function is as follows. Binds together with bS18 to 16S ribosomal RNA. This Burkholderia vietnamiensis (strain G4 / LMG 22486) (Burkholderia cepacia (strain R1808)) protein is Small ribosomal subunit protein bS6.